Here is a 231-residue protein sequence, read N- to C-terminus: Thiamine import ATP-binding protein ThiQ (231 aa).

Residues 2-230 (LRLEDLDIRK…PPPALRGYLG (229 aa)) form the ABC transporter domain. 32–39 (GPSGAGKS) is an ATP binding site.

The protein belongs to the ABC transporter superfamily. Thiamine importer (TC 3.A.1.19.1) family. As to quaternary structure, the complex is composed of two ATP-binding proteins (ThiQ), two transmembrane proteins (ThiP) and a solute-binding protein (ThiB).

The protein resides in the cell inner membrane. The catalysed reaction is thiamine(out) + ATP + H2O = thiamine(in) + ADP + phosphate + H(+). In terms of biological role, part of the ABC transporter complex ThiBPQ involved in thiamine import. Responsible for energy coupling to the transport system. The polypeptide is Thiamine import ATP-binding protein ThiQ (Ruegeria sp. (strain TM1040) (Silicibacter sp.)).